We begin with the raw amino-acid sequence, 834 residues long: Periplasmic nitrate reductase (834 aa).

Positions 1 to 29 (MNLTRREFAKANAAAIAAAAAGLPILVRA) form a signal peptide, tat-type signal. Positions 41–97 (LVWNKAPCRFCGTGCSVMVATRDGQVVATHGDIKAEVNRGINCVKGYFLSKIMYGSD) constitute a 4Fe-4S Mo/W bis-MGD-type domain. Positions 48, 51, 55, and 83 each coordinate [4Fe-4S] cluster. Mo-bis(molybdopterin guanine dinucleotide) is bound by residues K85, Q152, N177, C181, 214 to 221 (WGSNMAEM), 245 to 249 (STFEH), 264 to 266 (QTD), M375, Q379, N485, 511 to 512 (SD), K534, D561, and 721 to 730 (TGRVLEHWHT). F797 is a binding site for substrate. 2 residues coordinate Mo-bis(molybdopterin guanine dinucleotide): N805 and K822.

Belongs to the prokaryotic molybdopterin-containing oxidoreductase family. NasA/NapA/NarB subfamily. In terms of assembly, component of the periplasmic nitrate reductase NapAB complex composed of NapA and NapB. [4Fe-4S] cluster is required as a cofactor. Requires Mo-bis(molybdopterin guanine dinucleotide) as cofactor. Post-translationally, predicted to be exported by the Tat system. The position of the signal peptide cleavage has not been experimentally proven.

It localises to the periplasm. The enzyme catalyses 2 Fe(II)-[cytochrome] + nitrate + 2 H(+) = 2 Fe(III)-[cytochrome] + nitrite + H2O. Functionally, catalytic subunit of the periplasmic nitrate reductase complex NapAB. Receives electrons from NapB and catalyzes the reduction of nitrate to nitrite. In Pseudomonas aeruginosa (strain UCBPP-PA14), this protein is Periplasmic nitrate reductase.